A 260-amino-acid polypeptide reads, in one-letter code: MLTFIGLGLYDERSISIAGRDALQAADYVAAEFYTSYLVDATVSDLETAHDIDIDVRDREGVEQHPEDILRKAQSEDVAFLTAGDTMISTTHTDLRLRAIDRGIDTRVIHGVTAQTAASGLTGLQNYRFGKSVTLPFPYAHGAEGVPTSVTDSIAANRERGLHTVVYLDIKANRDEYLRASDAAEMLATDLEDMLAIAVARAGSPDPTVRADRLSALAEKDFGDPLHLLVLPGELHHLEEEALAALADAPADMLNAVDSQ.

Residues Leu-9, Asp-85, Ile-88, 113–114 (TA), Leu-168, Ala-202, and His-227 contribute to the S-adenosyl-L-methionine site.

This sequence belongs to the diphthine synthase family. As to quaternary structure, homodimer.

The enzyme catalyses 2-[(3S)-amino-3-carboxypropyl]-L-histidyl-[translation elongation factor 2] + 3 S-adenosyl-L-methionine = diphthine-[translation elongation factor 2] + 3 S-adenosyl-L-homocysteine + 3 H(+). It functions in the pathway protein modification; peptidyl-diphthamide biosynthesis. Functionally, S-adenosyl-L-methionine-dependent methyltransferase that catalyzes the trimethylation of the amino group of the modified target histidine residue in translation elongation factor 2 (EF-2), to form an intermediate called diphthine. The three successive methylation reactions represent the second step of diphthamide biosynthesis. This Haloquadratum walsbyi (strain DSM 16790 / HBSQ001) protein is Diphthine synthase.